The primary structure comprises 287 residues: Protein REVEILLE 2 (287 aa).

The HTH myb-type domain occupies 31 to 85; sequence TITKQREKWTEAEHEKFVEALKLYGRAWRRIEEHVGTKTAVQIRSHAQKFFTKVA. Positions 58 to 81 form a DNA-binding region, H-T-H motif; sequence WRRIEEHVGTKTAVQIRSHAQKFF. Residues 134–177 form a disordered region; it reads QDEDNRSPTSVLSAHGSDGLGSIGSNSPNSSSAELSSHTEESLS. Low complexity predominate over residues 156-169; sequence IGSNSPNSSSAELS.

The protein localises to the nucleus. Positive regulator for cold-responsive gene expression and cold tolerance. Part of a regulatory feedback loop that controls a subset of the circadian outputs and modulates the central oscillator. Negatively self-regulates its own expression. The sequence is that of Protein REVEILLE 2 (RVE2) from Arabidopsis thaliana (Mouse-ear cress).